A 786-amino-acid chain; its full sequence is Endonuclease MutS2 (786 aa).

Residue 334–341 coordinates ATP; it reads GPNTGGKT. The Smr domain occupies 711 to 786; it reads LDLRGERYEN…GNGATVVYFK (76 aa).

Belongs to the DNA mismatch repair MutS family. MutS2 subfamily. As to quaternary structure, homodimer. Binds to stalled ribosomes, contacting rRNA.

Endonuclease that is involved in the suppression of homologous recombination and thus may have a key role in the control of bacterial genetic diversity. Functionally, acts as a ribosome collision sensor, splitting the ribosome into its 2 subunits. Detects stalled/collided 70S ribosomes which it binds and splits by an ATP-hydrolysis driven conformational change. Acts upstream of the ribosome quality control system (RQC), a ribosome-associated complex that mediates the extraction of incompletely synthesized nascent chains from stalled ribosomes and their subsequent degradation. Probably generates substrates for RQC. The protein is Endonuclease MutS2 of Ligilactobacillus salivarius (strain UCC118) (Lactobacillus salivarius).